Reading from the N-terminus, the 357-residue chain is DnaJ homolog subfamily C member 25 (357 aa).

The helical transmembrane segment at 19 to 39 (WLLLAPLLLVPLLARPAEALV) threads the bilayer. Residues 48–121 (DCYEVLGVSR…ETRKDYDYML (74 aa)) form the J domain. The next 2 helical transmembrane spans lie at 147–167 (VVIL…WWNS) and 241–261 (LLLF…AWYC).

It belongs to the DNAJC25 family.

It localises to the membrane. This is DnaJ homolog subfamily C member 25 (Dnajc25) from Mus musculus (Mouse).